The chain runs to 285 residues: Non-homologous end joining protein Ku (285 aa).

The Ku domain occupies 9-176 (ISFGLVNVPV…PAEIRHLEAS (168 aa)). The disordered stretch occupies residues 250-285 (AMTDQKKQQNTAESETEEKPTKSTLTPRGRRKVKGA).

The protein belongs to the prokaryotic Ku family. As to quaternary structure, homodimer. Interacts with LigD.

Its function is as follows. With LigD forms a non-homologous end joining (NHEJ) DNA repair enzyme, which repairs dsDNA breaks with reduced fidelity. Binds linear dsDNA with 5'- and 3'- overhangs but not closed circular dsDNA nor ssDNA. Recruits and stimulates the ligase activity of LigD. The sequence is that of Non-homologous end joining protein Ku from Desulfitobacterium hafniense (strain DSM 10664 / DCB-2).